We begin with the raw amino-acid sequence, 525 residues long: MLGKRKRVVLTIKDKLDIIKKLEEGISFKKLSVVYGIGESTVRDIKKNKERIINYANSSDPTSGVSKRKSMKSSTYEELDRVMIEWFNQQKTDGIPVSGTICAKQAKFFFDALGMEGDFNASSGWLTRFKQRHGIPKAAGKGTKLKGDETAAREFCGSFQEFVEKENLQPEQIYGADQTGLFWKCLPSRTLTLETDQSTSGCRSSRERIIIMCCANATGLHKLNLCVVGKAKKPRAFKGTDLSNLPVTYYSQKGAWIEQSVFRQWFEKYFVPQVQKHLKSKGLLEKAVLLLDFPPARPNEEMLSSDDGRIIVKYLPPNVTSLIQPMSQGVLATVKRYYRAGLLQKYMDEGNDPKIFWKNLTVLDAIYEVSRAWNMVKSSTITKAWKKLFPGNEENSGMNIDEGAILAANLATVLQNTEECEHVDIENIDQWFDSRSSDSSCQVLTDSESAEDQTKAAEQKPSSKSRKTELNPEKHISHKAALEWTENLLDYLEQQDDMLLSDKLVLRRLRTIIRKKQKIQNNKNH.

The 52-residue stretch at 1–52 (MLGKRKRVVLTIKDKLDIIKKLEEGISFKKLSVVYGIGESTVRDIKKNKERI) folds into the HTH psq-type domain. DNA-binding regions (H-T-H motif) lie at residues 28 to 48 (FKKL…IKKN) and 100 to 132 (TICA…FKQR). One can recognise an HTH CENPB-type domain in the interval 67 to 139 (KRKSMKSSTY…KQRHGIPKAA (73 aa)). Residues 168–385 (LQPEQIYGAD…VKSSTITKAW (218 aa)) form the DDE-1 domain. The interval 442–474 (QVLTDSESAEDQTKAAEQKPSSKSRKTELNPEK) is disordered.

The protein belongs to the tigger transposable element derived protein family.

The protein localises to the nucleus. This is Tigger transposable element-derived protein 2 (TIGD2) from Homo sapiens (Human).